The sequence spans 1180 residues: Nonsense-mediated mRNA decay factor SMG7 (1180 aa).

TPR repeat units follow at residues Gln-151–Asn-184 and Gln-186–Phe-218. Disordered stretches follow at residues Pro-496–Thr-636, Gln-692–Gln-795, Cys-893–Leu-913, Ser-1019–Gln-1127, and Ser-1148–His-1180. Residues Leu-504 to Gly-520 are compositionally biased toward polar residues. Composition is skewed to basic and acidic residues over residues Glu-547–Asn-559, Asn-584–Asp-606, and Thr-615–Lys-627. The span at Gln-692 to Pro-718 shows a compositional bias: polar residues. Residues Pro-728–Gln-740 are compositionally biased toward pro residues. Positions Thr-741–Gln-778 are enriched in low complexity. Polar residues predominate over residues Trp-1026–Thr-1038. The span at Pro-1039–Pro-1065 shows a compositional bias: low complexity. Over residues Asp-1076–Lys-1090 the composition is skewed to basic and acidic residues. Positions Ser-1103–Ala-1125 are enriched in polar residues.

The protein resides in the cytoplasm. The protein localises to the nucleus. Plays a role in nonsense-mediated mRNA decay. Recruits UPF1 to cytoplasmic mRNA decay bodies. Together with SMG5 is thought to provide a link to the mRNA degradation machinery involving exonucleolytic pathways, and to serve as an adapter for UPF1 to protein phosphatase 2A (PP2A), thereby triggering UPF1 dephosphorylation. Required for normal embryonic development. The protein is Nonsense-mediated mRNA decay factor SMG7 of Danio rerio (Zebrafish).